The chain runs to 347 residues: Protein RecA (347 aa).

Position 68–75 (68–75 (GPESSGKT)) interacts with ATP.

It belongs to the RecA family.

The protein resides in the cytoplasm. Functionally, can catalyze the hydrolysis of ATP in the presence of single-stranded DNA, the ATP-dependent uptake of single-stranded DNA by duplex DNA, and the ATP-dependent hybridization of homologous single-stranded DNAs. It interacts with LexA causing its activation and leading to its autocatalytic cleavage. The polypeptide is Protein RecA (Nocardia farcinica (strain IFM 10152)).